The chain runs to 486 residues: Protein nucleotidyltransferase YdiU (486 aa).

ATP contacts are provided by Gly90, Gly92, Arg93, Lys113, Asp125, Gly126, Arg176, and Arg183. Asp252 serves as the catalytic Proton acceptor. The Mg(2+) site is built by Asn253 and Asp262. Residue Asp262 participates in ATP binding.

The protein belongs to the SELO family. It depends on Mg(2+) as a cofactor. The cofactor is Mn(2+).

The enzyme catalyses L-seryl-[protein] + ATP = 3-O-(5'-adenylyl)-L-seryl-[protein] + diphosphate. It catalyses the reaction L-threonyl-[protein] + ATP = 3-O-(5'-adenylyl)-L-threonyl-[protein] + diphosphate. The catalysed reaction is L-tyrosyl-[protein] + ATP = O-(5'-adenylyl)-L-tyrosyl-[protein] + diphosphate. It carries out the reaction L-histidyl-[protein] + UTP = N(tele)-(5'-uridylyl)-L-histidyl-[protein] + diphosphate. The enzyme catalyses L-seryl-[protein] + UTP = O-(5'-uridylyl)-L-seryl-[protein] + diphosphate. It catalyses the reaction L-tyrosyl-[protein] + UTP = O-(5'-uridylyl)-L-tyrosyl-[protein] + diphosphate. Functionally, nucleotidyltransferase involved in the post-translational modification of proteins. It can catalyze the addition of adenosine monophosphate (AMP) or uridine monophosphate (UMP) to a protein, resulting in modifications known as AMPylation and UMPylation. The chain is Protein nucleotidyltransferase YdiU from Pseudomonas putida (strain GB-1).